The primary structure comprises 726 residues: ORC ubiquitin ligase 1 (726 aa).

The segment at 18–56 (CHICLGKVRQPVICINNHVFCSICIDLWLKNNSQCPACR) adopts an RING-type; degenerate zinc-finger fold. Coiled coils occupy residues 87–129 (LRKT…TILD) and 155–270 (ETVA…MNSI). Residue Ser210 is modified to Phosphoserine. The interval 274–335 (ALPADGKGSK…ARQESTSKAE (62 aa)) is disordered. Over residues 280-290 (KGSKGSEEDVA) the composition is skewed to basic and acidic residues. A compositionally biased stretch (low complexity) spans 300–320 (KQPSSSTSSSSHLAKPSSSRL). The span at 321 to 334 (CDTSSARQESTSKA) shows a compositional bias: polar residues. Phosphoserine is present on residues Ser526, Ser553, Ser561, Ser568, Ser570, Ser719, and Ser721. Positions 687-726 (QSPWSTSFVPEKRNKNVNQSTKRKIQSSLSNASPSKATKS) are disordered. Residues 702–726 (NVNQSTKRKIQSSLSNASPSKATKS) show a composition bias toward polar residues.

Associates with ORC complex. Binds to chromatin; association is cell cycle-regulated, absent from mitotic chromosomes, is associated with chromatin from G1 and partially released from chromatin from mid S-phase. Auto-ubiquitinated.

Its subcellular location is the chromosome. It carries out the reaction S-ubiquitinyl-[E2 ubiquitin-conjugating enzyme]-L-cysteine + [acceptor protein]-L-lysine = [E2 ubiquitin-conjugating enzyme]-L-cysteine + N(6)-ubiquitinyl-[acceptor protein]-L-lysine.. In terms of biological role, E3 ubiquitin ligase essential for DNA replication origin activation during S phase. Acts as a replication origin selector which selects the origins to be fired and catalyzes the multi-mono-ubiquitination of a subset of chromatin-bound ORC3 and ORC5 during S-phase. This is ORC ubiquitin ligase 1 (OBI1) from Pongo abelii (Sumatran orangutan).